Consider the following 329-residue polypeptide: DNA-directed RNA polymerase subunit alpha (329 aa).

An alpha N-terminal domain (alpha-NTD) region spans residues 1–235; that stretch reads MQGSVTEFLK…EQLEAFVDLR (235 aa). An alpha C-terminal domain (alpha-CTD) region spans residues 249–329; sequence FDPILLRPVD…NWPPASIADE (81 aa).

Belongs to the RNA polymerase alpha chain family. In terms of assembly, homodimer. The RNAP catalytic core consists of 2 alpha, 1 beta, 1 beta' and 1 omega subunit. When a sigma factor is associated with the core the holoenzyme is formed, which can initiate transcription.

It catalyses the reaction RNA(n) + a ribonucleoside 5'-triphosphate = RNA(n+1) + diphosphate. In terms of biological role, DNA-dependent RNA polymerase catalyzes the transcription of DNA into RNA using the four ribonucleoside triphosphates as substrates. The protein is DNA-directed RNA polymerase subunit alpha of Shigella flexneri serotype 5b (strain 8401).